The chain runs to 262 residues: Small ribosomal subunit protein uS2 (262 aa).

The protein belongs to the universal ribosomal protein uS2 family.

This chain is Small ribosomal subunit protein uS2, found in Azobacteroides pseudotrichonymphae genomovar. CFP2.